Here is a 181-residue protein sequence, read N- to C-terminus: Large ribosomal subunit protein uL5 (181 aa).

The protein belongs to the universal ribosomal protein uL5 family. Part of the 50S ribosomal subunit; part of the 5S rRNA/L5/L18/L25 subcomplex. Contacts the 5S rRNA and the P site tRNA. Forms a bridge to the 30S subunit in the 70S ribosome.

Its function is as follows. This is one of the proteins that bind and probably mediate the attachment of the 5S RNA into the large ribosomal subunit, where it forms part of the central protuberance. In the 70S ribosome it contacts protein S13 of the 30S subunit (bridge B1b), connecting the 2 subunits; this bridge is implicated in subunit movement. Contacts the P site tRNA; the 5S rRNA and some of its associated proteins might help stabilize positioning of ribosome-bound tRNAs. This Nitrosococcus oceani (strain ATCC 19707 / BCRC 17464 / JCM 30415 / NCIMB 11848 / C-107) protein is Large ribosomal subunit protein uL5.